Reading from the N-terminus, the 176-residue chain is ATP-dependent protease subunit HslV (176 aa).

Thr2 is an active-site residue. The Na(+) site is built by Gly157, Cys160, and Thr163.

The protein belongs to the peptidase T1B family. HslV subfamily. In terms of assembly, a double ring-shaped homohexamer of HslV is capped on each side by a ring-shaped HslU homohexamer. The assembly of the HslU/HslV complex is dependent on binding of ATP.

Its subcellular location is the cytoplasm. The catalysed reaction is ATP-dependent cleavage of peptide bonds with broad specificity.. Its activity is regulated as follows. Allosterically activated by HslU binding. In terms of biological role, protease subunit of a proteasome-like degradation complex believed to be a general protein degrading machinery. In Salmonella agona (strain SL483), this protein is ATP-dependent protease subunit HslV.